The chain runs to 304 residues: tRNA pseudouridine synthase B (304 aa).

D48 serves as the catalytic Nucleophile.

Belongs to the pseudouridine synthase TruB family. Type 1 subfamily.

The enzyme catalyses uridine(55) in tRNA = pseudouridine(55) in tRNA. Functionally, responsible for synthesis of pseudouridine from uracil-55 in the psi GC loop of transfer RNAs. In Pseudomonas paraeruginosa (strain DSM 24068 / PA7) (Pseudomonas aeruginosa (strain PA7)), this protein is tRNA pseudouridine synthase B.